The following is a 551-amino-acid chain: Putative ABC transporter ATP-binding protein BA_3364/GBAA_3364/BAS3118 (551 aa).

ABC transporter domains follow at residues 5 to 243 (AEIK…FRPF) and 293 to 525 (LSAE…SINR). ATP is bound by residues 39–46 (GGSGSGKT) and 327–334 (GKNGTGKS).

This sequence belongs to the ABC transporter superfamily.

The protein resides in the cell membrane. Functionally, probably part of an ABC transporter complex. Responsible for energy coupling to the transport system. This chain is Putative ABC transporter ATP-binding protein BA_3364/GBAA_3364/BAS3118, found in Bacillus anthracis.